A 438-amino-acid chain; its full sequence is Xylose isomerase (438 aa).

Residues H102 and D105 contribute to the active site. Mg(2+) is bound by residues E233, E269, H272, D297, D308, D310, and D340.

This sequence belongs to the xylose isomerase family. In terms of assembly, homotetramer. Mg(2+) is required as a cofactor.

Its subcellular location is the cytoplasm. It carries out the reaction alpha-D-xylose = alpha-D-xylulofuranose. The chain is Xylose isomerase from Solibacter usitatus (strain Ellin6076).